A 450-amino-acid polypeptide reads, in one-letter code: Glucose-6-phosphate isomerase (450 aa).

Glu291 serves as the catalytic Proton donor. Catalysis depends on residues His312 and Lys426.

The protein belongs to the GPI family.

The protein resides in the cytoplasm. It catalyses the reaction alpha-D-glucose 6-phosphate = beta-D-fructose 6-phosphate. Its pathway is carbohydrate biosynthesis; gluconeogenesis. The protein operates within carbohydrate degradation; glycolysis; D-glyceraldehyde 3-phosphate and glycerone phosphate from D-glucose: step 2/4. Functionally, catalyzes the reversible isomerization of glucose-6-phosphate to fructose-6-phosphate. This Clostridium perfringens (strain SM101 / Type A) protein is Glucose-6-phosphate isomerase.